The sequence spans 190 residues: MDRTEQKSIIEGLLFVSGDEGISPEQIAKVLEIEGNEVIDILEEMQKECEGAHRGLQIVQYAKVYRFATKKEHASYYQKLIDIPTAASLSQAALETLAIVAYRQPITRTEMEEIRGVKTDKALQTLVSHLLIKEMGRAEGPGRPILYGTTKEFLDTFGLKTLDDLPPLSEENEQMNEADLFFGSLQEISK.

The protein belongs to the ScpB family. In terms of assembly, homodimer. Homodimerization may be required to stabilize the binding of ScpA to the Smc head domains. Component of a cohesin-like complex composed of ScpA, ScpB and the Smc homodimer, in which ScpA and ScpB bind to the head domain of Smc. The presence of the three proteins is required for the association of the complex with DNA.

The protein localises to the cytoplasm. Its function is as follows. Participates in chromosomal partition during cell division. May act via the formation of a condensin-like complex containing Smc and ScpA that pull DNA away from mid-cell into both cell halves. This chain is Segregation and condensation protein B, found in Bacillus cereus (strain ATCC 10987 / NRS 248).